A 218-amino-acid polypeptide reads, in one-letter code: CTD kinase subunit gamma (218 aa).

Positions 2–138 (DPFEGRMTFL…DAMATVEAHE (137 aa)) constitute a CID domain. Positions 137 to 157 (HEQASKSGDTSTSGAISKNDI) are disordered. Residues 141–152 (SKSGDTSTSGAI) are compositionally biased toward polar residues.

This sequence belongs to the CTK3 family. CTDK-I consists of three subunits, ctk1/lsk1, ctk2/lsc1 and ctk3 (also called alpha, beta and gamma).

The protein resides in the cytoplasm. It localises to the nucleus. Subunit of the CTDK-I complex, which hyperphosphorylates the C-terminal heptapeptide repeat domain (CTD) of the largest RNA polymerase II subunit. As part of the CTDK-I complex, involved in RNA polymerase II transcriptional elongation and pre-mRNA 3'-end processing. Together with ctk2, required for ctk1/lsk1 CTD kinase activation. This chain is CTD kinase subunit gamma, found in Schizosaccharomyces pombe (strain 972 / ATCC 24843) (Fission yeast).